We begin with the raw amino-acid sequence, 353 residues long: Photosystem II D2 protein (353 aa).

The residue at position 2 (T2) is an N-acetylthreonine. A Phosphothreonine modification is found at T2. The chain crosses the membrane as a helical span at residues 41-61 (CAYFALGGWFTGTTFVTSWYT). H118 lines the chlorophyll a pocket. Residues 125–141 (GFMLRQFELARSVQLRP) traverse the membrane as a helical segment. Q130 and N143 together coordinate pheophytin a. The helical transmembrane segment at 153 to 166 (VFVSVFLIYPLGQS) threads the bilayer. Residue H198 participates in chlorophyll a binding. The chain crosses the membrane as a helical span at residues 208–228 (AALLCAIHGATVENTLFEDGD). A plastoquinone is bound by residues H215 and F262. H215 lines the Fe cation pocket. Residue H269 coordinates Fe cation. A helical membrane pass occupies residues 279 to 295 (GLWMSALGVVGLALNLR).

This sequence belongs to the reaction center PufL/M/PsbA/D family. PSII is composed of 1 copy each of membrane proteins PsbA, PsbB, PsbC, PsbD, PsbE, PsbF, PsbH, PsbI, PsbJ, PsbK, PsbL, PsbM, PsbT, PsbX, PsbY, PsbZ, Psb30/Ycf12, at least 3 peripheral proteins of the oxygen-evolving complex and a large number of cofactors. It forms dimeric complexes. The D1/D2 heterodimer binds P680, chlorophylls that are the primary electron donor of PSII, and subsequent electron acceptors. It shares a non-heme iron and each subunit binds pheophytin, quinone, additional chlorophylls, carotenoids and lipids. There is also a Cl(-1) ion associated with D1 and D2, which is required for oxygen evolution. The PSII complex binds additional chlorophylls, carotenoids and specific lipids. is required as a cofactor.

The protein resides in the plastid. It is found in the chloroplast thylakoid membrane. It catalyses the reaction 2 a plastoquinone + 4 hnu + 2 H2O = 2 a plastoquinol + O2. Photosystem II (PSII) is a light-driven water:plastoquinone oxidoreductase that uses light energy to abstract electrons from H(2)O, generating O(2) and a proton gradient subsequently used for ATP formation. It consists of a core antenna complex that captures photons, and an electron transfer chain that converts photonic excitation into a charge separation. The D1/D2 (PsbA/PsbD) reaction center heterodimer binds P680, the primary electron donor of PSII as well as several subsequent electron acceptors. D2 is needed for assembly of a stable PSII complex. In Nandina domestica (Heavenly bamboo), this protein is Photosystem II D2 protein.